A 188-amino-acid chain; its full sequence is Elongation factor P-like protein (188 aa).

Belongs to the elongation factor P family.

This Saccharophagus degradans (strain 2-40 / ATCC 43961 / DSM 17024) protein is Elongation factor P-like protein.